A 542-amino-acid polypeptide reads, in one-letter code: Hydroxylamine reductase (542 aa).

The [4Fe-4S] cluster site is built by C3, C6, C15, and C21. Positions 243, 267, 311, 398, 426, 451, 485, and 487 each coordinate hybrid [4Fe-2O-2S] cluster. At C398 the chain carries Cysteine persulfide.

This sequence belongs to the HCP family. Requires [4Fe-4S] cluster as cofactor. The cofactor is hybrid [4Fe-2O-2S] cluster.

Its subcellular location is the cytoplasm. It catalyses the reaction A + NH4(+) + H2O = hydroxylamine + AH2 + H(+). Functionally, catalyzes the reduction of hydroxylamine to form NH(3) and H(2)O. This Syntrophobacter fumaroxidans (strain DSM 10017 / MPOB) protein is Hydroxylamine reductase.